The sequence spans 541 residues: Protein yellow (541 aa).

Residues 1-21 (MFQDKGWVLVTLIALVTPSWA) form the signal peptide. N-linked (GlcNAc...) asparagine glycosylation occurs at Asn-144.

The protein belongs to the major royal jelly protein family.

It is found in the secreted. Functionally, controls the pigmentation pattern of the adult cuticle and larval mouth parts. The chain is Protein yellow (y) from Drosophila erecta (Fruit fly).